The following is a 427-amino-acid chain: MTYREYRDKVLHFIEEHEKWRSHTINLIASENITSPSVNRAVASGFMHKYAEGWPKQRYYQGCKYVDEVELIGVELFTKLFKSDYADLRPVSGTNANQAVFFGLGQPGDKVIVLHTSHGGHISHMPFGAAGMRGLEVHTWPFDFESFNIDVDKAEKMIRELEPKIVVFGGSLFPFPHPVKELAPVAKEVGAFVVYDAAHVLGLIAGGEFQDPLREGADIMTASTHKTFPGPQGGVILYKKFADDETIAKLQWAIFPGVVSNHHLHHMAGKVITAAEMLEYGEAYAKQIVKNAKALAEALAEEGFKVIGEDQGYTKSHQVIVDVSDLHPAGGGWAAPLLEEAGIILNKNLLPWDPLEKVNEPSGLRIGVQEMTRVGMMEDEMKEIAHFMKRVLIDKEDPKKVRKDVYYFRLEYQKVYYSFDYGLPMKE.

120 to 122 is a (6S)-5,6,7,8-tetrahydrofolate binding site; the sequence is GHI. Lys226 is subject to N6-(pyridoxal phosphate)lysine.

Belongs to the SHMT family. As to quaternary structure, homodimer. It depends on pyridoxal 5'-phosphate as a cofactor.

Its subcellular location is the cytoplasm. The protein operates within amino-acid biosynthesis; glycine biosynthesis; glycine from L-serine: step 1/1. Catalyzes the reversible interconversion of serine and glycine with a modified folate serving as the one-carbon carrier. Also exhibits a pteridine-independent aldolase activity toward beta-hydroxyamino acids, producing glycine and aldehydes, via a retro-aldol mechanism. The polypeptide is Serine hydroxymethyltransferase (Pyrococcus horikoshii (strain ATCC 700860 / DSM 12428 / JCM 9974 / NBRC 100139 / OT-3)).